The following is a 140-amino-acid chain: MKAVIAKNEEQLKDAFYVREEVFVKEQNVPAEEEIDELENESEHIVVYDGEKPVGAGRWRMKDGYGKLERICVLKSHRSAGVGGIIMKALEKAAADGGASGFILNAQTQAVPFYKKHGYRVLSEKEFLDAGIPHLQMMKD.

An N-acetyltransferase domain is found at 2–140 (KAVIAKNEEQ…GIPHLQMMKD (139 aa)).

Belongs to the acetyltransferase family.

This is an uncharacterized protein from Bacillus subtilis (strain 168).